Here is a 65-residue protein sequence, read N- to C-terminus: Large ribosomal subunit protein uL29 (65 aa).

It belongs to the universal ribosomal protein uL29 family.

The sequence is that of Large ribosomal subunit protein uL29 from Paracidovorax citrulli (strain AAC00-1) (Acidovorax citrulli).